A 227-amino-acid chain; its full sequence is Lipoprotein-releasing system ATP-binding protein LolD (227 aa).

In terms of domain architecture, ABC transporter spans 6 to 227; sequence LKIEGLRKTY…HLEDGVLVER (222 aa). An ATP-binding site is contributed by 43 to 50; the sequence is APSGAGKS.

This sequence belongs to the ABC transporter superfamily. Lipoprotein translocase (TC 3.A.1.125) family. As to quaternary structure, the complex is composed of two ATP-binding proteins (LolD) and two transmembrane proteins (LolC and LolE).

The protein localises to the cell inner membrane. Its function is as follows. Part of the ABC transporter complex LolCDE involved in the translocation of mature outer membrane-directed lipoproteins, from the inner membrane to the periplasmic chaperone, LolA. Responsible for the formation of the LolA-lipoprotein complex in an ATP-dependent manner. The sequence is that of Lipoprotein-releasing system ATP-binding protein LolD from Ruegeria sp. (strain TM1040) (Silicibacter sp.).